Here is a 414-residue protein sequence, read N- to C-terminus: Glucose-1-phosphate adenylyltransferase (414 aa).

Residues Gly164, 184-185, and Ser204 each bind alpha-D-glucose 1-phosphate; that span reads EK.

The protein belongs to the bacterial/plant glucose-1-phosphate adenylyltransferase family. Homotetramer.

The enzyme catalyses alpha-D-glucose 1-phosphate + ATP + H(+) = ADP-alpha-D-glucose + diphosphate. The protein operates within glycan biosynthesis; glycogen biosynthesis. Functionally, involved in the biosynthesis of ADP-glucose, a building block required for the elongation reactions to produce glycogen. Catalyzes the reaction between ATP and alpha-D-glucose 1-phosphate (G1P) to produce pyrophosphate and ADP-Glc. The polypeptide is Glucose-1-phosphate adenylyltransferase (Acidothermus cellulolyticus (strain ATCC 43068 / DSM 8971 / 11B)).